A 249-amino-acid chain; its full sequence is Meiotic drive suppressor wtf25 (249 aa).

A disordered region spans residues 1-40 (MKNNYTSLKSPLDEEDELKTDHEIDLEKGPLPEYDSEEEG). Residues 19–30 (KTDHEIDLEKGP) are compositionally biased toward basic and acidic residues. A run of 4 helical transmembrane segments spans residues 73 to 93 (LLIILLISFTSIILFNAPAFC), 110 to 130 (WTLFGFWCLVCTLALIFLTYF), 151 to 170 (NMIFAFCKSSLFCLVLLKAE), and 187 to 207 (SASAFTFMAVSSILIFIAETV).

Belongs to the WTF family. Homomer. Interacts with other proteins that exhibit high sequence similarity.

It localises to the spore membrane. Its subcellular location is the vacuole membrane. In terms of biological role, acts as a suppressor component of the dual wtf meiotic drive system, and can suppress but not confer meiotic drive by compatible poisons. Wtf meiotic drive systems promote unequal transmission of alleles from the parental zygote to progeny spores by encoding a poison and an antidote from the same locus; the poison is trans-acting and forms toxic aggregates in all spores within an ascus, wherease the antidote is spore-specific and targets aggregates for degradation by the vacuole. Meiotic drive by wtf systems therefore lead to poisoning of all progeny that do not inherit the dual poison/antidote allele, or express a compatible antidote. The sequence is that of Meiotic drive suppressor wtf25 from Schizosaccharomyces pombe (strain 972 / ATCC 24843) (Fission yeast).